Consider the following 192-residue polypeptide: Elongation factor P (192 aa).

N6-(3,6-diaminohexanoyl)-5-hydroxylysine is present on lysine 37.

It belongs to the elongation factor P family. Post-translationally, may be beta-lysylated on the epsilon-amino group of Lys-37 by the combined action of EpmA and EpmB, and then hydroxylated on the C5 position of the same residue by EpmC (if this protein is present). Lysylation is critical for the stimulatory effect of EF-P on peptide-bond formation. The lysylation moiety may extend toward the peptidyltransferase center and stabilize the terminal 3-CCA end of the tRNA. Hydroxylation of the C5 position on Lys-37 may allow additional potential stabilizing hydrogen-bond interactions with the P-tRNA.

The protein localises to the cytoplasm. It functions in the pathway protein biosynthesis; polypeptide chain elongation. In terms of biological role, involved in peptide bond synthesis. Alleviates ribosome stalling that occurs when 3 or more consecutive Pro residues or the sequence PPG is present in a protein, possibly by augmenting the peptidyl transferase activity of the ribosome. Modification of Lys-37 is required for alleviation. The polypeptide is Elongation factor P (Acinetobacter baylyi (strain ATCC 33305 / BD413 / ADP1)).